The following is a 421-amino-acid chain: 4-hydroxy-3-methylbut-2-en-1-yl diphosphate synthase (flavodoxin) (421 aa).

[4Fe-4S] cluster contacts are provided by C298, C301, C344, and E351.

This sequence belongs to the IspG family. [4Fe-4S] cluster is required as a cofactor.

The catalysed reaction is (2E)-4-hydroxy-3-methylbut-2-enyl diphosphate + oxidized [flavodoxin] + H2O + 2 H(+) = 2-C-methyl-D-erythritol 2,4-cyclic diphosphate + reduced [flavodoxin]. It functions in the pathway isoprenoid biosynthesis; isopentenyl diphosphate biosynthesis via DXP pathway; isopentenyl diphosphate from 1-deoxy-D-xylulose 5-phosphate: step 5/6. Functionally, converts 2C-methyl-D-erythritol 2,4-cyclodiphosphate (ME-2,4cPP) into 1-hydroxy-2-methyl-2-(E)-butenyl 4-diphosphate. The polypeptide is 4-hydroxy-3-methylbut-2-en-1-yl diphosphate synthase (flavodoxin) (Neisseria gonorrhoeae (strain ATCC 700825 / FA 1090)).